Consider the following 353-residue polypeptide: Guanidino acid hydrolase, mitochondrial (353 aa).

The transit peptide at 1–33 (MLQLLKSSWVRSAGSGVVTWRASAGLFCPGTRQ) directs the protein to the mitochondrion. The tract at residues 29–52 (PGTRQASDTSDTLHHPSPSSESQV) is disordered. Mn(2+) contacts are provided by His-163 and His-188. Position 194 is an N6-acetyllysine (Lys-194). Lys-218 bears the N6-acetyllysine; alternate mark. At Lys-218 the chain carries N6-succinyllysine; alternate. Position 279 (Asp-279) interacts with Mn(2+).

Belongs to the arginase family. Agmatinase subfamily. It depends on Mn(2+) as a cofactor.

Its subcellular location is the mitochondrion. It catalyses the reaction 3-guanidinopropanoate + H2O = urea + beta-alanine. The catalysed reaction is 4-guanidinobutanoate + H2O = urea + 4-aminobutanoate. It carries out the reaction taurocyamine + H2O = urea + taurine. The enzyme catalyses L-arginine + H2O = urea + L-ornithine. Its pathway is nitrogen metabolism; urea cycle; L-ornithine and urea from L-arginine: step 1/1. Functionally, hydrolyzes linear guanidino acids to form urea and the corresponding amines. Displays specificity for substrates having a negatively charged head group and short chains including taurocyamine, guanidino propanoic and butanoic acids. May protect cells by detoxifying potentially harmful amounts of guanidino acids. Metabolizes L-arginine with low efficiency. This is Guanidino acid hydrolase, mitochondrial (Agmat) from Rattus norvegicus (Rat).